The following is an 81-amino-acid chain: Spore coat protein F-like protein YraG (81 aa).

Belongs to the CotF family.

It localises to the spore coat. The protein is Spore coat protein F-like protein YraG (yraG) of Bacillus subtilis (strain 168).